A 310-amino-acid chain; its full sequence is tRNA dimethylallyltransferase (310 aa).

Position 13–20 (13–20 (GPTASGKT)) interacts with ATP. 15–20 (TASGKT) contributes to the substrate binding site. Interaction with substrate tRNA regions lie at residues 38–41 (DSAL), 162–166 (QRLSR), 243–248 (RCVGYR), and 276–283 (KRQITWLR).

Belongs to the IPP transferase family. Monomer. It depends on Mg(2+) as a cofactor.

The catalysed reaction is adenosine(37) in tRNA + dimethylallyl diphosphate = N(6)-dimethylallyladenosine(37) in tRNA + diphosphate. Its function is as follows. Catalyzes the transfer of a dimethylallyl group onto the adenine at position 37 in tRNAs that read codons beginning with uridine, leading to the formation of N6-(dimethylallyl)adenosine (i(6)A). This is tRNA dimethylallyltransferase from Vibrio atlanticus (strain LGP32) (Vibrio splendidus (strain Mel32)).